The primary structure comprises 120 residues: MNRTIIEKVRSMLCECGLPKTFRADAANTAVHIINKYPSTAINFHVPDEVWFQSVPTYSYLRRFGCVAYIHCDEGKLKPRAKKGEEKGSYLINRIVSILYTIGIGKTSSPRKASHLGIKG.

It localises to the mitochondrion. This is an uncharacterized protein from Arabidopsis thaliana (Mouse-ear cress).